The primary structure comprises 442 residues: tRNA modification GTPase MnmE (442 aa).

(6S)-5-formyl-5,6,7,8-tetrahydrofolate contacts are provided by R24, E82, and K122. Residues 219–366 (GFKVALVGEP…LRRALKREIE (148 aa)) form the TrmE-type G domain. A K(+)-binding site is contributed by N229. Residues 229–234 (NAGKST), 248–254 (TDIAGTT), and 273–276 (DTAG) contribute to the GTP site. A Mg(2+)-binding site is contributed by S233. The K(+) site is built by T248, I250, and T253. T254 is a binding site for Mg(2+). A (6S)-5-formyl-5,6,7,8-tetrahydrofolate-binding site is contributed by K442.

It belongs to the TRAFAC class TrmE-Era-EngA-EngB-Septin-like GTPase superfamily. TrmE GTPase family. As to quaternary structure, homodimer. Heterotetramer of two MnmE and two MnmG subunits. K(+) serves as cofactor.

The protein localises to the cytoplasm. Exhibits a very high intrinsic GTPase hydrolysis rate. Involved in the addition of a carboxymethylaminomethyl (cmnm) group at the wobble position (U34) of certain tRNAs, forming tRNA-cmnm(5)s(2)U34. This Agrobacterium fabrum (strain C58 / ATCC 33970) (Agrobacterium tumefaciens (strain C58)) protein is tRNA modification GTPase MnmE.